A 611-amino-acid polypeptide reads, in one-letter code: CRS2-associated factor 2, chloroplastic (611 aa).

Residues 1 to 58 (MPPPPPQRPASSHVGRANLFSASPPPLSNRRYPHHRSLPLPPVSPRRRDPKKHSQQPS) constitute a chloroplast transit peptide. The tract at residues 1-72 (MPPPPPQRPA…TDSGPTRTVT (72 aa)) is disordered. A compositionally biased stretch (polar residues) spans 55–72 (QQPSQEEPTDSGPTRTVT). 2 CRM domains span residues 232-328 (EPLT…TRPR) and 350-446 (DGFT…YSKP). The tract at residues 486 to 509 (KMFKLWKSAVDSSLALLLDDAEAN) is CRS2 binding. Residues 554–578 (MNDEPETSVAGNEEGQLEQSPDLRD) form a disordered region.

In terms of assembly, interacts with CRS2 and RNA. Part of large ribonucleo-protein complexes that include group IIB introns, CRS2 and CAF2.

The protein resides in the plastid. The protein localises to the chloroplast stroma. In terms of biological role, required for the splicing of group IIB introns in chloroplasts. Forms splicing particles with CRS2. Interacts with RNA and confers intron specificity of the splicing particles. The protein is CRS2-associated factor 2, chloroplastic (CAF2) of Zea mays (Maize).